Reading from the N-terminus, the 918-residue chain is Alpha-scruin (918 aa).

Kelch repeat units follow at residues 82–133 (VVLA…YFHR), 134–187 (RVYV…VMDE), 188–235 (RIFV…NNEG), 237–289 (IYVI…TQNK), 291–341 (IWIW…KTGA), and 342–390 (HVFI…AIPA). Positions 398 to 427 (EVPTSTPSSKAKPQPGSKPTSVKYKKQPDI) are disordered. An IQ domain is found at 430–459 (RNEAAKKVQRRWRRYIEQKSITKRMQQGDS). 6 Kelch repeats span residues 590 to 641 (VIIG…YYRS), 642 to 695 (AIYI…VFND), 696 to 743 (VLYA…AHGG), 745 to 795 (IWLL…VCDN), 797 to 849 (IWLC…ALES), and 851 to 898 (LYIA…TIPP).

As to expression, sperm.

Its function is as follows. Actin bundling protein found in the acrosomal sperm process. This chain is Alpha-scruin, found in Limulus polyphemus (Atlantic horseshoe crab).